The primary structure comprises 52 residues: Creatine kinase B-type (52 aa).

The Phosphagen kinase C-terminal domain maps to alanine 1–valine 52. The region spanning alanine 1 to valine 52 is the Phosphagen kinase N-terminal domain. The ATP site is built by arginine 13 and arginine 47.

The protein belongs to the ATP:guanido phosphotransferase family. In terms of assembly, dimer of identical or non-identical chains, which can be either B (brain type) or M (muscle type). With MM being the major form in skeletal muscle and myocardium, MB existing in myocardium, and BB existing in many tissues, especially brain. In terms of tissue distribution, expressed in rectal gland, brain, skeletal muscle (at protein level).

Its subcellular location is the cytoplasm. It localises to the cytosol. It is found in the mitochondrion. The protein localises to the basal cell membrane. It carries out the reaction creatine + ATP = N-phosphocreatine + ADP + H(+). Functionally, reversibly catalyzes the transfer of phosphate between ATP and various phosphogens (e.g. creatine phosphate). Creatine kinase isoenzymes play a central role in energy transduction in tissues with large, fluctuating energy demands, such as skeletal muscle, heart, brain and spermatozoa. The sequence is that of Creatine kinase B-type from Squalus acanthias (Spiny dogfish).